A 78-amino-acid polypeptide reads, in one-letter code: U-scoloptoxin(13)-Er1a (78 aa).

Residues 1–24 (MFPSWSTTFVLCMGLCSLMNGALA) form the signal peptide.

It belongs to the scoloptoxin-13 family. In terms of processing, contains 4 disulfide bonds. In terms of tissue distribution, expressed by the venom gland.

It is found in the secreted. The protein is U-scoloptoxin(13)-Er1a of Ethmostigmus rubripes (Giant centipede).